The primary structure comprises 421 residues: Autophagy-related protein 17 (421 aa).

The protein belongs to the ATG17 family. As to quaternary structure, forms a complex with ATG13, ATG29 and CIS1/ATG31. The ATG17-ATG29-ATG31 complex interacts with the ATG1-ATG13 complex. Forms a complex with SNX4 and ATG20. Interacts with ATG11.

The protein localises to the cytoplasm. The protein resides in the preautophagosomal structure membrane. Functionally, autophagy-specific protein that functions with ATG13, ATG29, and CIS1/ATG31 in response to autophagy-inducing signals as a scaffold to recruit other ATG proteins to organize pre-autophagosomal structure (PAS) formation. Modulates the timing and magnitude of the autophagy response, such as the size of the sequestering vesicles, through interacting with and regulating ATG1 kinase activity. Plays particularly a role in pexophagy and nucleophagy. With ATG13, is required for ATG1 activation by autophosphorylation. Recruits ATG9 to the pre-autophagosomal structure. The polypeptide is Autophagy-related protein 17 (Kluyveromyces marxianus (strain DMKU3-1042 / BCC 29191 / NBRC 104275) (Yeast)).